A 249-amino-acid polypeptide reads, in one-letter code: Serine acetyltransferase (249 aa).

This sequence belongs to the transferase hexapeptide repeat family.

The protein localises to the cytoplasm. The catalysed reaction is L-serine + acetyl-CoA = O-acetyl-L-serine + CoA. It functions in the pathway amino-acid biosynthesis; L-cysteine biosynthesis; L-cysteine from L-serine: step 1/2. The polypeptide is Serine acetyltransferase (cysE) (Synechocystis sp. (strain ATCC 27184 / PCC 6803 / Kazusa)).